The sequence spans 380 residues: Alpha-N-acetylneuraminate alpha-2,8-sialyltransferase ST8SIA3 (380 aa).

At 1-9 the chain is on the cytoplasmic side; it reads MRNCKMARV. The chain crosses the membrane as a helical; Signal-anchor for type II membrane protein span at residues 10–33; the sequence is ASVLGLVMLSVALLILSLISYVSL. The Lumenal portion of the chain corresponds to 34-380; that stretch reads KKENIFTTPK…LTKLTLSHCA (347 aa). N-linked (GlcNAc...) asparagine glycosylation is found at N93, N113, and N160. 2 disulfides stabilise this stretch: C162–C313 and C176–C379. 2 residues coordinate CMP-N-acetyl-beta-neuraminate: N167 and N190. A glycan (N-linked (GlcNAc...) asparagine) is linked at N206. Residues S300, T301, G302, W322, Y336, and H337 each coordinate CMP-N-acetyl-beta-neuraminate. Residue H354 is the Proton donor/acceptor of the active site.

This sequence belongs to the glycosyltransferase 29 family. As to quaternary structure, homodimer. In terms of processing, autopolysialylated. In terms of tissue distribution, expressed in fetal and adult brain and fetal liver.

The protein localises to the golgi apparatus membrane. It catalyses the reaction [N-acetyl-alpha-D-neuraminosyl-(2-&gt;8)](n) + CMP-N-acetyl-beta-neuraminate = [N-acetyl-alpha-D-neuraminosyl-(2-&gt;8)](n+1) + CMP + H(+). The enzyme catalyses alpha-Neu5Ac-(2-&gt;3)-beta-D-Gal-(1-&gt;4)-6S-D-GlcNAc + CMP-N-acetyl-beta-neuraminate = alpha-Neu5Ac-(2-&gt;8)-alpha-Neu5Ac-(2-&gt;3)-beta-D-Gal-(1-&gt;4)-6S-D-GlcNAc + CMP + H(+). It carries out the reaction a ganglioside GM3 (d18:1(4E)) + CMP-N-acetyl-beta-neuraminate = a ganglioside GD3 (d18:1(4E)) + CMP + H(+). The catalysed reaction is a ganglioside GM3 + CMP-N-acetyl-beta-neuraminate = a ganglioside GD3 + CMP + H(+). It catalyses the reaction an N-acetyl-alpha-neuraminyl-(2-&gt;3)-beta-D-galactosyl derivative + CMP-N-acetyl-beta-neuraminate = an N-acetyl-alpha-neuraminyl-(2-&gt;8)-N-acetyl-alpha-neuraminyl-(2-&gt;3)-beta-D-galactosyl derivative + CMP + H(+). The enzyme catalyses an N-acetyl-alpha-neuraminyl-(2-&gt;3)-beta-D-galactosyl-(1-&gt;4)-N-acetyl-beta-D-glucosaminyl derivative + CMP-N-acetyl-beta-neuraminate = an alpha-Neu5Ac-(2-&gt;8)-alpha-Neu5Ac-(2-&gt;3)-beta-D-Gal-(1-&gt;4)-beta-D-GlcNAc derivative + CMP + H(+). It participates in protein modification; protein glycosylation. Catalyzes the transfer of sialic acid from a CMP-linked sialic acid donor onto a terminal alpha-2,3-, alpha-2,6-, or alpha-2,8-linked sialic acid of an acceptor, such as N-linked oligosaccharides of glycoproteins and glycolipids through alpha-2,8-linkages. Forms oligosialic and polysialic acid on various sialylated N-acetyllactosamine oligosaccharides of glycoproteins, including FETUB N-glycans, a2-HS-glycoprotein (AHSG) and alpha 2,3-sialylated glycosphingolipids, such as alpha 2,3-sialylparagloboside and ganglioside GM3 and to a lesser extent NCAM1 N-glycans. However, it is much more specific to N-linked oligosaccharides of glycoproteins than glycosphingolipids. 2,3-sialylparagloboside serves as the best acceptor substrate among the glycolipids. alpha-Neu5Ac-(2-&gt;8)-alpha-Neu5Ac-(2-&gt;3)-beta-D-Gal-(1-&gt;4)-6S-D-GlcNAc and monosialyl and disialyl N-acetyllactosamines are the best acceptor substrates among glycoproteins. May plays critical role in the striatum by mediating the formation of disialylated and trisialylated terminal glycotopes on N- and O-glycans of specific striatal proteins, regulating their distribution in lipid rafts, affecting their interaction with other binding partners, and subsequently modulating striatal functions. This Homo sapiens (Human) protein is Alpha-N-acetylneuraminate alpha-2,8-sialyltransferase ST8SIA3.